A 290-amino-acid chain; its full sequence is Undecaprenyl-diphosphatase (290 aa).

8 helical membrane passes run 1–21, 48–68, 101–121, 125–145, 161–181, 202–222, 231–251, and 266–286; these read MFLL…LTEF, SAFT…AWVF, IHVL…DDLI, LFSV…MIIA, INYF…WPGF, SDFT…LSLL, AHIP…LIAI, and FAIY…GFGI.

It belongs to the UppP family.

Its subcellular location is the cell membrane. The catalysed reaction is di-trans,octa-cis-undecaprenyl diphosphate + H2O = di-trans,octa-cis-undecaprenyl phosphate + phosphate + H(+). Its function is as follows. Catalyzes the dephosphorylation of undecaprenyl diphosphate (UPP). Confers resistance to bacitracin. This is Undecaprenyl-diphosphatase from Staphylococcus epidermidis (strain ATCC 35984 / DSM 28319 / BCRC 17069 / CCUG 31568 / BM 3577 / RP62A).